Reading from the N-terminus, the 393-residue chain is NAD(P)H-quinone oxidoreductase subunit H, chloroplastic (393 aa).

Belongs to the complex I 49 kDa subunit family. NDH is composed of at least 16 different subunits, 5 of which are encoded in the nucleus.

It localises to the plastid. The protein localises to the chloroplast thylakoid membrane. It carries out the reaction a plastoquinone + NADH + (n+1) H(+)(in) = a plastoquinol + NAD(+) + n H(+)(out). It catalyses the reaction a plastoquinone + NADPH + (n+1) H(+)(in) = a plastoquinol + NADP(+) + n H(+)(out). In terms of biological role, NDH shuttles electrons from NAD(P)H:plastoquinone, via FMN and iron-sulfur (Fe-S) centers, to quinones in the photosynthetic chain and possibly in a chloroplast respiratory chain. The immediate electron acceptor for the enzyme in this species is believed to be plastoquinone. Couples the redox reaction to proton translocation, and thus conserves the redox energy in a proton gradient. In Zea mays (Maize), this protein is NAD(P)H-quinone oxidoreductase subunit H, chloroplastic.